Consider the following 377-residue polypeptide: Ribosomal RNA large subunit methyltransferase G (377 aa).

It belongs to the methyltransferase superfamily. RlmG family.

It localises to the cytoplasm. The enzyme catalyses guanosine(1835) in 23S rRNA + S-adenosyl-L-methionine = N(2)-methylguanosine(1835) in 23S rRNA + S-adenosyl-L-homocysteine + H(+). Specifically methylates the guanine in position 1835 (m2G1835) of 23S rRNA. This is Ribosomal RNA large subunit methyltransferase G from Shewanella sp. (strain MR-4).